Reading from the N-terminus, the 93-residue chain is Conotoxin Mr105 (93 aa).

A signal peptide spans 1-22 (MQRGAVLLGVVALLVLWPQAGA). The propeptide occupies 23–33 (ELYDVNDPDVR).

The protein belongs to the F superfamily. Post-translationally, contains 4 disulfide bonds. Expressed by the venom duct.

The protein localises to the secreted. The polypeptide is Conotoxin Mr105 (Conus marmoreus (Marble cone)).